We begin with the raw amino-acid sequence, 203 residues long: Phospho-2-dehydro-3-deoxyheptonate aldolase (203 aa).

Residues 1–10 (MIDRLVRDSR) are compositionally biased toward basic and acidic residues. Residues 1–28 (MIDRLVRDSRGPVTERNPPHMSLSAGPA) are disordered.

This sequence belongs to the class-I DAHP synthase family.

The catalysed reaction is D-erythrose 4-phosphate + phosphoenolpyruvate + H2O = 7-phospho-2-dehydro-3-deoxy-D-arabino-heptonate + phosphate. The protein operates within metabolic intermediate biosynthesis; chorismate biosynthesis; chorismate from D-erythrose 4-phosphate and phosphoenolpyruvate: step 1/7. In terms of biological role, stereospecific condensation of phosphoenolpyruvate (PEP) and D-erythrose-4-phosphate (E4P) giving rise to 3-deoxy-D-arabino-heptulosonate-7-phosphate (DAHP). The chain is Phospho-2-dehydro-3-deoxyheptonate aldolase (aroA) from Amycolatopsis methanolica.